The primary structure comprises 340 residues: MPIKHAIVHLIEKKPDGTPAMLHARDAELGDSQAIENLLADLNESYNAKNKAWGFFQGESGAYPFSGWLGDYLEGDRDFVGFSREAVEHLQKLMEESNLSTGGHILFAHYQQGMTDYLAIALLHHSEGVAVNESLEVTPSRHLDLAQLHLAARINISEWRNNKQSKQYISFIKGKGGKKVSDYFRDFIGCQEGVDSPSETRTLLKAFSDFVESEDMAEEQAREKTETLVDYATSQARIGEPMTLDALSELMDDQQPRAFYDYIRNKDYGLSPEIPADKRTLNQFRRFTGRAEGLSISFEAHLLGSRIEYDEERDTLRISSLPTQLRDQLKRRKAEQESTS.

Belongs to the YejK family.

The protein localises to the cytoplasm. It is found in the nucleoid. This Pseudomonas paraeruginosa (strain DSM 24068 / PA7) (Pseudomonas aeruginosa (strain PA7)) protein is Nucleoid-associated protein PSPA7_4451.